The chain runs to 159 residues: V-type proton ATPase 16 kDa proteolipid subunit c (159 aa).

Over 1 to 11 the chain is Lumenal; it reads MSEEGSPMYSP. A helical transmembrane segment spans residues 12-32; it reads FFGVMGAASAMVFSALGAAYG. Over 33-54 the chain is Cytoplasmic; the sequence is TAKSGVGISAMSVMRPELIMKC. A helical transmembrane segment spans residues 55–75; that stretch reads IIPVVMAGIIAIYGLVVAVLI. Topologically, residues 76–93 are lumenal; that stretch reads AGKLDEAPTYTLYQGFVH. The helical transmembrane segment at 94–114 threads the bilayer; that stretch reads MGAGLSVGLSGLAAGFAIGIV. At 115 to 132 the chain is on the cytoplasmic side; it reads GDAGVRGTAQQPRLYVGM. The chain crosses the membrane as a helical span at residues 133-153; sequence ILILIFAEVLGLYGLIVAIFL. Residues 154-159 are Lumenal-facing; it reads YTKTSS.

This sequence belongs to the V-ATPase proteolipid subunit family. V-ATPase is a heteromultimeric enzyme made up of two complexes: the ATP-hydrolytic V1 complex and the proton translocation V0 complex. The V1 complex consists of three catalytic AB heterodimers that form a heterohexamer, three peripheral stalks each consisting of EG heterodimers, one central rotor including subunits D and F, and the regulatory subunits C and H. The proton translocation complex V0 consists of the proton transport subunit a, a ring of proteolipid subunits c9c'', rotary subunit d, subunits e and f, and two accessory subunits.

The protein localises to the vacuole membrane. Functionally, proton-conducting pore forming subunit of the V0 complex of vacuolar(H+)-ATPase (V-ATPase), a multisubunit enzyme composed of a peripheral complex (V1) that hydrolyzes ATP and a membrane integral complex (V0) that translocates protons. V-ATPase is responsible for acidifying and maintaining the pH of intracellular compartments and in some cell types, is targeted to the plasma membrane, where it is responsible for acidifying the extracellular environment. This chain is V-type proton ATPase 16 kDa proteolipid subunit c, found in Nephrops norvegicus (Norway lobster).